The following is a 384-amino-acid chain: Substance-K receptor (384 aa).

Topologically, residues 1–32 (MGAHASVTDTNILSGLESNATGVTAFSMPGWQ) are extracellular. An N-linked (GlcNAc...) asparagine glycan is attached at Asn19. A helical transmembrane segment spans residues 33–56 (LALWATAYLALVLVAVTGNATVIW). Over 57 to 69 (IILAHERMRTVTN) the chain is Cytoplasmic. Residues 70 to 90 (YFIINLALADLCMAAFNATFN) form a helical membrane-spanning segment. The Extracellular portion of the chain corresponds to 91-107 (FIYASHNIWYFGSTFCY). Cysteines 106 and 181 form a disulfide. Residues 108–129 (FQNLFPVTAMFVSIYSMTAIAA) traverse the membrane as a helical segment. The Cytoplasmic segment spans residues 130 to 149 (DRYMAIVHPFQPRLSAPSTK). A helical transmembrane segment spans residues 150-170 (AVIAVIWLVALALASPQCFYS). Residues 171–196 (TITVDQGATKCVVAWPNDNGGKMLLL) are Extracellular-facing. A helical membrane pass occupies residues 197 to 218 (YHLVVFVLIYFLPLVVMFAAYS). At 219-251 (VIGLTLWKRAVPRHQAHGANLRHLQAKKKFVKA) the chain is on the cytoplasmic side. The helical transmembrane segment at 252-272 (MVLVVVTFAICWLPYHLYFIL) threads the bilayer. The Extracellular portion of the chain corresponds to 273–290 (GTFQEDIYYRKFIQQVYL). The chain crosses the membrane as a helical span at residues 291 to 310 (ALFWLAMSSTMYNPIIYCCL). Residues 311–384 (NHRFRSGFRL…GPQDGEPAGP (74 aa)) are Cytoplasmic-facing. The S-palmitoyl cysteine moiety is linked to residue Cys324. The interval 365–384 (HSEATNGQVGGPQDGEPAGP) is disordered.

This sequence belongs to the G-protein coupled receptor 1 family.

The protein localises to the cell membrane. Its function is as follows. This is a receptor for the tachykinin neuropeptide substance K (neurokinin A). It is associated with G proteins that activate a phosphatidylinositol-calcium second messenger system. The rank order of affinity of this receptor to tachykinins is: substance K &gt; neuromedin-K &gt; substance P. The protein is Substance-K receptor (Tacr2) of Mus musculus (Mouse).